A 199-amino-acid polypeptide reads, in one-letter code: Probable GTP-binding protein EngB (199 aa).

One can recognise an EngB-type G domain in the interval 28–199 (DLPEIALAGR…DSWDAILEQV (172 aa)). Residues 36–43 (GRSNVGKS), 63–67 (GKTQL), 81–84 (DVPG), 148–151 (TKAD), and 180–182 (FSS) contribute to the GTP site. Positions 43 and 65 each coordinate Mg(2+).

The protein belongs to the TRAFAC class TrmE-Era-EngA-EngB-Septin-like GTPase superfamily. EngB GTPase family. Requires Mg(2+) as cofactor.

In terms of biological role, necessary for normal cell division and for the maintenance of normal septation. The protein is Probable GTP-binding protein EngB of Streptococcus pyogenes serotype M18 (strain MGAS8232).